The sequence spans 307 residues: Formate hydrogenlyase subunit 4 (307 aa).

Topologically, residues 1-2 (MS) are periplasmic. The chain crosses the membrane as a helical span at residues 3–23 (VLYPLIQALVLFAVAPLLSGI). Residues 24 to 67 (TRVARARLHNRRGPGVLQEYRDIIKLLGRQSVGPDASGWVFRLT) are Cytoplasmic-facing. Residues 68-88 (PYVMVGVMLTIATALPVVTVG) traverse the membrane as a helical segment. Residues 89 to 93 (SPLPQ) are Periplasmic-facing. The chain crosses the membrane as a helical span at residues 94 to 114 (LGDLITLLYLFAIARFFFAIS). Residues 115–131 (GLDTGSPFTAIGASREA) are Cytoplasmic-facing. A helical transmembrane segment spans residues 132-152 (MLGVLVEPMLLLGLWVAAQVA). The Periplasmic portion of the chain corresponds to 153 to 167 (GSTNISNITDTVYHW). The chain crosses the membrane as a helical span at residues 168–188 (PLSQSIPLVLALCACAFATFI). The Cytoplasmic segment spans residues 189-221 (EMGKLPFDLAEAEQELQEGPLSEYSGSGFGVMK). The chain crosses the membrane as a helical span at residues 222 to 242 (WGISLKQLVVLQMFVGVFIPW). Topologically, residues 243–253 (GQMETFTAGGL) are periplasmic. A helical transmembrane segment spans residues 254 to 274 (LLALVIAIVKLVVGVLVIALF). Residues 275-284 (ENSMARLRLD) lie on the Cytoplasmic side of the membrane. Residues 285–305 (ITPRITWAGFGFAFLAFVSLL) form a helical membrane-spanning segment. The Periplasmic portion of the chain corresponds to 306 to 307 (AA).

It belongs to the complex I subunit 1 family. As to quaternary structure, FHL comprises of a formate dehydrogenase, unidentified electron carriers and a hydrogenase (isoenzyme 3). In this non-energy conserving pathway molecular hydrogen and carbodioxide from formate are released.

It is found in the cell inner membrane. This chain is Formate hydrogenlyase subunit 4 (hycD), found in Escherichia coli (strain K12).